The chain runs to 642 residues: Mini-chromosome maintenance complex-binding protein (642 aa).

Polar residues predominate over residues alanine 151 to proline 161. Positions alanine 151–arginine 200 are disordered. Phosphoserine is present on serine 154. Threonine 160 carries the phosphothreonine modification. Residues serine 167 and serine 298 each carry the phosphoserine modification.

It belongs to the MCMBP family. As to quaternary structure, interacts with the MCM complex: associates with the MCM3-7 complex which lacks MCM2, while it does not interact with the MCM complex when MCM2 is present (MCM2-7 complex). Interacts with the RPA complex, when composed of all RPA1, RPA2 and RPA3 components, but not with RPA1 or RPA2 alone.

The protein localises to the nucleus. Its function is as follows. Associated component of the MCM complex that acts as a regulator of DNA replication. Binds to the MCM complex during late S phase and promotes the disassembly of the MCM complex from chromatin, thereby acting as a key regulator of pre-replication complex (pre-RC) unloading from replicated DNA. Can dissociate the MCM complex without addition of ATP; probably acts by destabilizing interactions of each individual subunits of the MCM complex. Required for sister chromatid cohesion. This chain is Mini-chromosome maintenance complex-binding protein (Mcmbp), found in Rattus norvegicus (Rat).